A 469-amino-acid polypeptide reads, in one-letter code: Argininosuccinate lyase (469 aa).

Belongs to the lyase 1 family. Argininosuccinate lyase subfamily.

It localises to the cytoplasm. It carries out the reaction 2-(N(omega)-L-arginino)succinate = fumarate + L-arginine. The protein operates within amino-acid biosynthesis; L-arginine biosynthesis; L-arginine from L-ornithine and carbamoyl phosphate: step 3/3. The chain is Argininosuccinate lyase from Burkholderia cenocepacia (strain HI2424).